The primary structure comprises 82 residues: Small ribosomal subunit protein bS18 (82 aa).

The interval M1–P21 is disordered.

It belongs to the bacterial ribosomal protein bS18 family. In terms of assembly, part of the 30S ribosomal subunit. Forms a tight heterodimer with protein bS6.

Binds as a heterodimer with protein bS6 to the central domain of the 16S rRNA, where it helps stabilize the platform of the 30S subunit. This Corynebacterium kroppenstedtii (strain DSM 44385 / JCM 11950 / CIP 105744 / CCUG 35717) protein is Small ribosomal subunit protein bS18.